The following is a 510-amino-acid chain: NAD(P)H-quinone oxidoreductase subunit 2 A, chloroplastic (510 aa).

Transmembrane regions (helical) follow at residues 24–44 (LLLF…GLIL), 59–79 (WFYF…LFRW), 99–119 (IFQF…VEYI), 124–144 (MAIT…MFLC), 149–169 (LITL…LSGY), 183–203 (YLLM…WLYG), 229–249 (ISIA…PAPF), 295–315 (WHLL…LIAI), 323–343 (MLAY…IVGD), 354–374 (YMLF…SFGL), 395–415 (ALSL…AGFF), and 418–438 (LHLF…IGLL).

Belongs to the complex I subunit 2 family. As to quaternary structure, NDH is composed of at least 16 different subunits, 5 of which are encoded in the nucleus.

It is found in the plastid. The protein resides in the chloroplast thylakoid membrane. It carries out the reaction a plastoquinone + NADH + (n+1) H(+)(in) = a plastoquinol + NAD(+) + n H(+)(out). It catalyses the reaction a plastoquinone + NADPH + (n+1) H(+)(in) = a plastoquinol + NADP(+) + n H(+)(out). Functionally, NDH shuttles electrons from NAD(P)H:plastoquinone, via FMN and iron-sulfur (Fe-S) centers, to quinones in the photosynthetic chain and possibly in a chloroplast respiratory chain. The immediate electron acceptor for the enzyme in this species is believed to be plastoquinone. Couples the redox reaction to proton translocation, and thus conserves the redox energy in a proton gradient. This chain is NAD(P)H-quinone oxidoreductase subunit 2 A, chloroplastic, found in Dioscorea elephantipes (Elephant's foot yam).